Here is a 373-residue protein sequence, read N- to C-terminus: tRNA-specific 2-thiouridylase MnmA (373 aa).

ATP is bound by residues 12–19 (GMSGGVDS) and M38. The segment at 98 to 100 (NPD) is interaction with target base in tRNA. The active-site Nucleophile is C103. C103 and C200 are joined by a disulfide. G127 provides a ligand contact to ATP. Positions 150–152 (KDQ) are interaction with tRNA. C200 functions as the Cysteine persulfide intermediate in the catalytic mechanism. Residues 312–313 (RY) are interaction with tRNA.

This sequence belongs to the MnmA/TRMU family.

The protein localises to the cytoplasm. It carries out the reaction S-sulfanyl-L-cysteinyl-[protein] + uridine(34) in tRNA + AH2 + ATP = 2-thiouridine(34) in tRNA + L-cysteinyl-[protein] + A + AMP + diphosphate + H(+). Functionally, catalyzes the 2-thiolation of uridine at the wobble position (U34) of tRNA, leading to the formation of s(2)U34. The protein is tRNA-specific 2-thiouridylase MnmA of Streptococcus uberis (strain ATCC BAA-854 / 0140J).